The sequence spans 282 residues: Pantothenate synthetase (282 aa).

Residue 30-37 (MGFLHDGH) participates in ATP binding. The active-site Proton donor is H37. Q60 contacts (R)-pantoate. Q60 contributes to the beta-alanine binding site. 146–149 (GQKD) serves as a coordination point for ATP. Residue Q152 participates in (R)-pantoate binding. ATP contacts are provided by residues I175 and 183–186 (KSSR).

Belongs to the pantothenate synthetase family. Homodimer.

It localises to the cytoplasm. The enzyme catalyses (R)-pantoate + beta-alanine + ATP = (R)-pantothenate + AMP + diphosphate + H(+). Its pathway is cofactor biosynthesis; (R)-pantothenate biosynthesis; (R)-pantothenate from (R)-pantoate and beta-alanine: step 1/1. Catalyzes the condensation of pantoate with beta-alanine in an ATP-dependent reaction via a pantoyl-adenylate intermediate. This chain is Pantothenate synthetase, found in Campylobacter jejuni subsp. jejuni serotype O:23/36 (strain 81-176).